The chain runs to 238 residues: Orotidine 5'-phosphate decarboxylase (238 aa).

Residues Asp18, Lys40, 67–76, Thr122, Arg183, Gln192, and Arg213 each bind substrate; that span reads DMKLLDIDNT. Lys69 functions as the Proton donor in the catalytic mechanism.

This sequence belongs to the OMP decarboxylase family. Type 1 subfamily. In terms of assembly, homodimer.

It catalyses the reaction orotidine 5'-phosphate + H(+) = UMP + CO2. It functions in the pathway pyrimidine metabolism; UMP biosynthesis via de novo pathway; UMP from orotate: step 2/2. Its function is as follows. Catalyzes the decarboxylation of orotidine 5'-monophosphate (OMP) to uridine 5'-monophosphate (UMP). The polypeptide is Orotidine 5'-phosphate decarboxylase (Brucella melitensis biotype 2 (strain ATCC 23457)).